A 31-amino-acid chain; its full sequence is Elongation factor Tu (31 aa).

It belongs to the GTP-binding elongation factor family. EF-Tu/EF-1A subfamily. In terms of assembly, monomer.

The protein localises to the cytoplasm. This protein promotes the GTP-dependent binding of aminoacyl-tRNA to the A-site of ribosomes during protein biosynthesis. The sequence is that of Elongation factor Tu (tuf) from Streptomyces laurentii.